The following is a 106-amino-acid chain: Thioredoxin-like protein YusE (106 aa).

The 101-residue stretch at 1–101 folds into the Thioredoxin domain; the sequence is MKELQEHELD…LYELIKQKSS (101 aa). Residues C26 and C29 are joined by a disulfide bond.

This Bacillus subtilis (strain 168) protein is Thioredoxin-like protein YusE (yusE).